We begin with the raw amino-acid sequence, 167 residues long: U-scoloptoxin(08)-Er5a (167 aa).

Residues 1–22 form the signal peptide; sequence MKTNCEFPLLCLLIVLVANVEG. A propeptide spanning residues 23–94 is cleaved from the precursor; it reads EVEDTGLKMV…KRLWRNWERR (72 aa). RLWRNWE repeat units follow at residues 34–40, 61–67, and 86–92; these read RLWRNWE. Gln-95 carries the pyrrolidone carboxylic acid modification. The RLWRNWE 4; approximate repeat unit spans residues 107–113; it reads ELWRNWE. The propeptide occupies 112–118; sequence WEDLKRR. Gln-119 carries the post-translational modification Pyrrolidone carboxylic acid. An RLWRNWE 5 repeat occupies 134 to 140; that stretch reads RLWRNWE. Positions 139 to 167 are excised as a propeptide; sequence WEDNHATLRKRSADSLSRQKRLGKERGKE. The interval 147 to 167 is disordered; sequence RKRSADSLSRQKRLGKERGKE.

The protein belongs to the scoloptoxin-08 family. Expressed by the venom gland.

It is found in the secreted. The chain is U-scoloptoxin(08)-Er5a from Ethmostigmus rubripes (Giant centipede).